The following is a 1347-amino-acid chain: Serine-aspartate repeat-containing protein D (1347 aa).

The N-terminal stretch at 1 to 35 (MLNRENKTAITRKGMVSNRLNKFSIRKYTVGTASI) is a signal peptide. The YSIRK-G/S signaling motif motif lies at 23–34 (FSIRKYTVGTAS). Residues 36 to 568 (LVGTTLIFGL…NNQSGGAGQE (533 aa)) are ligand binding A region. Positions 55–185 (STNKELNEAT…NKKVDAKTES (131 aa)) are disordered. Composition is skewed to polar residues over residues 62-71 (EATTSASDNQ) and 94-109 (EMVSSQGNETTSNGNK). Residues 130–145 (KSDEQASPKSTNEDLN) are compositionally biased toward basic and acidic residues. Composition is skewed to polar residues over residues 146–155 (TKQTISNQEA) and 163–173 (NKSVVNAQPTN). The segment covering 174–183 (EENKKVDAKT) has biased composition (basic and acidic residues). CNA-B domains are found at residues 569–680 (VYKI…IYKP), 681–791 (KYNL…YKTP), 792–901 (KYNL…FYKP), 902–1012 (TYNL…YKTS), and 1013–1123 (KYSL…EEDT). Disordered regions lie at residues 857–883 (ETPSGYTPTQVGSGTDEGIDSNGTSTT), 972–992 (YTPTSVTSGNDTEKDSNGLTT), and 1078–1323 (EKPA…SNNA). 2 stretches are compositionally biased toward polar residues: residues 860-869 (SGYTPTQVGS) and 972-981 (YTPTSVTSGN). 2 stretches are compositionally biased toward acidic residues: residues 1091-1101 (TEDDKDADGGE) and 1118-1286 (YFEE…DSDS). Positions 1310–1314 (LPETG) match the LPXTG sorting signal motif. A Pentaglycyl murein peptidoglycan amidated threonine modification is found at Thr-1313. The propeptide at 1314 to 1347 (GNENSGSNNATLFGGLFAALGSLLLFGRRKKQNK) is removed by sortase.

The protein belongs to the serine-aspartate repeat-containing protein (SDr) family. Interacts with host DSG1; this interaction increases S.aureus adherence to keratinocytes.

The protein resides in the secreted. Its subcellular location is the cell wall. Functionally, cell surface-associated calcium-binding protein which plays an important role in adhesion and pathogenesis. Mediates interactions with components of the extracellular matrix such as host DSG1 to promote bacterial adhesion to host cells. Contributes to the resistance to killing by innate immune components such as neutrophils present in blood and thus attenuates bacterial clearance. This is Serine-aspartate repeat-containing protein D (sdrD) from Staphylococcus aureus (strain MW2).